Here is a 175-residue protein sequence, read N- to C-terminus: Large ribosomal subunit protein uL10 (175 aa).

This sequence belongs to the universal ribosomal protein uL10 family. In terms of assembly, part of the ribosomal stalk of the 50S ribosomal subunit. The N-terminus interacts with L11 and the large rRNA to form the base of the stalk. The C-terminus forms an elongated spine to which L12 dimers bind in a sequential fashion forming a multimeric L10(L12)X complex.

Its function is as follows. Forms part of the ribosomal stalk, playing a central role in the interaction of the ribosome with GTP-bound translation factors. In Prochlorococcus marinus (strain NATL2A), this protein is Large ribosomal subunit protein uL10.